The primary structure comprises 427 residues: Enolase (427 aa).

Gln-163 is a binding site for (2R)-2-phosphoglycerate. The active-site Proton donor is Glu-205. Asp-242, Glu-285, and Asp-312 together coordinate Mg(2+). (2R)-2-phosphoglycerate-binding residues include Lys-337, Arg-366, Ser-367, and Lys-388. The active-site Proton acceptor is the Lys-337.

Belongs to the enolase family. It depends on Mg(2+) as a cofactor.

The protein resides in the cytoplasm. It localises to the secreted. It is found in the cell surface. It carries out the reaction (2R)-2-phosphoglycerate = phosphoenolpyruvate + H2O. The protein operates within carbohydrate degradation; glycolysis; pyruvate from D-glyceraldehyde 3-phosphate: step 4/5. Catalyzes the reversible conversion of 2-phosphoglycerate (2-PG) into phosphoenolpyruvate (PEP). It is essential for the degradation of carbohydrates via glycolysis. This Polaromonas sp. (strain JS666 / ATCC BAA-500) protein is Enolase.